The sequence spans 463 residues: MTDKAPQKTHLNIVIIGHVDSGKSTTTGHLIYKCGGFDPRALEKVEAAAAQLGKSSFKFAWILDKLKAERERGITIDISLWKFQTNRFTITIIDAPGHRDFIKNMITGTSQADVALLVVSAATGEFEAGVSRNGQTREHALLAYTMGVKQLIVCVNKMDLTDPPYSHKRFDEVVRNVMVYLKKIGYNPATIPFVPVSGWTGENISSPSQKMGWFKGWKVKRKDGFTKGQSLLEVLDALVPPVRPANKPLRLPLQDVYKIGGIGTVPVGKIETGILKPGMTISFAPSGFSAEVKSIEMHHEPLQMAFPGFNIGFNVKNIAVKSLKRGNVAGNSKSDPPTEASSFTAQVIILNHPGFIKAGYSPVIDCHTAHITCQFAELQEKIDRRTGKKLEDNPGLLKSGDAAIITLKPIKPFCVERFFDYPPLGRFAARDLKQTVAVGVVKSVEHKAGAAARRQVQKPVLVK.

Positions 8 to 245 (KTHLNIVIIG…DALVPPVRPA (238 aa)) constitute a tr-type G domain. Residues 17 to 24 (GHVDSGKS) are G1. 17 to 24 (GHVDSGKS) contributes to the GTP binding site. The G2 stretch occupies residues 73–77 (GITID). The G3 stretch occupies residues 94–97 (DAPG). GTP is bound by residues 94 to 98 (DAPGH) and 156 to 159 (NKMD). The segment at 156-159 (NKMD) is G4. The tract at residues 197-199 (SGW) is G5.

It belongs to the TRAFAC class translation factor GTPase superfamily. Classic translation factor GTPase family. EF-Tu/EF-1A subfamily. The 42S RNP particle comprises four subunits each of which contains one molecule of 5S RNA, three molecules of tRNA, two molecules of EF1-alpha and one molecule of the 5S RNA binding protein 43.

It is found in the cytoplasm. Functionally, this protein is one of two protein components of a 42S RNP particle that is very abundant in previtellogenic oocytes. A major function served by 42sp50 appears to be the storage of tRNAs for later use in oogenesis and early embryogenesis. Purified 42S particles can directly transfer aminoacyl tRNA to ribosomes. The protein is Elongation factor 1-alpha of Xenopus laevis (African clawed frog).